A 257-amino-acid polypeptide reads, in one-letter code: ATP synthase subunit a (257 aa).

Positions 1 to 4 are cleaved as a propeptide — removed in mature form; the sequence is MFIT. Helical transmembrane passes span 27–47, 58–78, 93–113, 122–142, 149–169, 189–209, 214–234, and 236–256; these read FSNF…LAII, IVPQ…LNLV, YFPF…LRLI, QLIF…ILGL, VFGL…LVLI, IIAG…FMGL, FIIG…EFGI, and FIQA…SLNL.

The protein belongs to the ATPase A chain family. As to quaternary structure, F-type ATPases have 2 components, CF(1) - the catalytic core - and CF(0) - the membrane proton channel. CF(1) has five subunits: alpha(3), beta(3), gamma(1), delta(1), epsilon(1). CF(0) has three main subunits: a, b and c.

It is found in the mitochondrion inner membrane. Mitochondrial membrane ATP synthase (F(1)F(0) ATP synthase or Complex V) produces ATP from ADP in the presence of a proton gradient across the membrane which is generated by electron transport complexes of the respiratory chain. F-type ATPases consist of two structural domains, F(1) - containing the extramembraneous catalytic core and F(0) - containing the membrane proton channel, linked together by a central stalk and a peripheral stalk. During catalysis, ATP synthesis in the catalytic domain of F(1) is coupled via a rotary mechanism of the central stalk subunits to proton translocation. Key component of the proton channel; it may play a direct role in the translocation of protons across the membrane. The chain is ATP synthase subunit a (atp6) from Schizosaccharomyces pombe (strain 972 / ATCC 24843) (Fission yeast).